Consider the following 301-residue polypeptide: Ornithine carbamoyltransferase (301 aa).

Residues 47–50 (STRT), Gln-74, Arg-98, and 125–128 (HPCQ) contribute to the carbamoyl phosphate site. L-ornithine contacts are provided by residues Asn-156, Asp-220, and 224 to 225 (SM). Residues 260-261 (CL) and Arg-288 each bind carbamoyl phosphate.

This sequence belongs to the aspartate/ornithine carbamoyltransferase superfamily. OTCase family.

Its subcellular location is the cytoplasm. The catalysed reaction is carbamoyl phosphate + L-ornithine = L-citrulline + phosphate + H(+). The protein operates within amino-acid biosynthesis; L-arginine biosynthesis; L-arginine from L-ornithine and carbamoyl phosphate: step 1/3. In terms of biological role, reversibly catalyzes the transfer of the carbamoyl group from carbamoyl phosphate (CP) to the N(epsilon) atom of ornithine (ORN) to produce L-citrulline. The chain is Ornithine carbamoyltransferase from Methanobrevibacter smithii (strain ATCC 35061 / DSM 861 / OCM 144 / PS).